An 843-amino-acid chain; its full sequence is Glycogen phosphorylase, brain form (843 aa).

Ala2 is modified (N-acetylalanine). The residue at position 15 (Ser15) is a Phosphoserine; by PHK; in form phosphorylase A. AMP is bound by residues Asp43, Tyr197, and Arg310. Position 197 is a phosphotyrosine (Tyr197). A Phosphotyrosine modification is found at Tyr473. Residue Ser524 is modified to Phosphoserine. Lys569 provides a ligand contact to pyridoxal 5'-phosphate. A pyridoxal 5'-phosphate region spans residues 677 to 678; that stretch reads TG. Lys681 carries the N6-(pyridoxal phosphate)lysine modification.

This sequence belongs to the glycogen phosphorylase family. Homodimer. Dimers associate into a tetramer to form the enzymatically active phosphorylase A. Pyridoxal 5'-phosphate serves as cofactor. Post-translationally, phosphorylation of Ser-15 converts phosphorylase B (unphosphorylated) to phosphorylase A.

The enzyme catalyses [(1-&gt;4)-alpha-D-glucosyl](n) + phosphate = [(1-&gt;4)-alpha-D-glucosyl](n-1) + alpha-D-glucose 1-phosphate. Its activity is regulated as follows. Activity of phosphorylase is controlled both by allosteric means (through the non-covalent binding of metabolites) and by covalent modification. Thus AMP allosterically activates, whereas ATP, ADP, and glucose-6-phosphate allosterically inhibit, phosphorylase B. In terms of biological role, glycogen phosphorylase that regulates glycogen mobilization. Phosphorylase is an important allosteric enzyme in carbohydrate metabolism. Enzymes from different sources differ in their regulatory mechanisms and in their natural substrates. However, all known phosphorylases share catalytic and structural properties. The chain is Glycogen phosphorylase, brain form (Pygb) from Mus musculus (Mouse).